Here is a 701-residue protein sequence, read N- to C-terminus: Elongation factor G (701 aa).

The tr-type G domain maps to T8–K290. GTP is bound by residues A17–T24, D88–H92, and N142–D145.

This sequence belongs to the TRAFAC class translation factor GTPase superfamily. Classic translation factor GTPase family. EF-G/EF-2 subfamily.

It is found in the cytoplasm. Catalyzes the GTP-dependent ribosomal translocation step during translation elongation. During this step, the ribosome changes from the pre-translocational (PRE) to the post-translocational (POST) state as the newly formed A-site-bound peptidyl-tRNA and P-site-bound deacylated tRNA move to the P and E sites, respectively. Catalyzes the coordinated movement of the two tRNA molecules, the mRNA and conformational changes in the ribosome. This is Elongation factor G from Buchnera aphidicola subsp. Cinara cedri (strain Cc).